Here is a 341-residue protein sequence, read N- to C-terminus: Methionine import ATP-binding protein MetN 3 (341 aa).

In terms of domain architecture, ABC transporter spans 2 to 241 (ILLENVKKIY…PKQDITKRFV (240 aa)). 38 to 45 (GYSGAGKS) provides a ligand contact to ATP.

It belongs to the ABC transporter superfamily. Methionine importer (TC 3.A.1.24) family. As to quaternary structure, the complex is composed of two ATP-binding proteins (MetN), two transmembrane proteins (MetI) and a solute-binding protein (MetQ).

It is found in the cell membrane. It carries out the reaction L-methionine(out) + ATP + H2O = L-methionine(in) + ADP + phosphate + H(+). It catalyses the reaction D-methionine(out) + ATP + H2O = D-methionine(in) + ADP + phosphate + H(+). Its function is as follows. Part of the ABC transporter complex MetNIQ involved in methionine import. Responsible for energy coupling to the transport system. The protein is Methionine import ATP-binding protein MetN 3 of Bacillus cereus (strain ATCC 14579 / DSM 31 / CCUG 7414 / JCM 2152 / NBRC 15305 / NCIMB 9373 / NCTC 2599 / NRRL B-3711).